The sequence spans 327 residues: Phenylalanine--tRNA ligase alpha subunit (327 aa).

Glu-252 lines the Mg(2+) pocket.

The protein belongs to the class-II aminoacyl-tRNA synthetase family. Phe-tRNA synthetase alpha subunit type 1 subfamily. As to quaternary structure, tetramer of two alpha and two beta subunits. It depends on Mg(2+) as a cofactor.

It localises to the cytoplasm. It carries out the reaction tRNA(Phe) + L-phenylalanine + ATP = L-phenylalanyl-tRNA(Phe) + AMP + diphosphate + H(+). This is Phenylalanine--tRNA ligase alpha subunit from Vibrio campbellii (strain ATCC BAA-1116).